Reading from the N-terminus, the 460-residue chain is MTAGKLWGGRFRERTAGLVEEYTESVSYDRALYAQDIAGSKAHARMLARQGVISAGDAGRITEGLEQIRKEIESGEFVWRTEMEDVHMNIESRLTELVGDAGRRLHTGRSRNDQVALDFRLFVSDRIRVWKNLVRGVIAALTAQAHEHKDTLLPGCTHLQAAQPVSLAQHLLAYAWMLRRDYDRLEDCDRRVRICPLGAAALAGTTYPLDPQSVAAELDMYGVFNNSMDAVSDRDFALEAQFCGSLIMAHMSRLCEEIILWANPNFGYIFLPDAYATGSSIMPQKKNPDVAEIMRGKTGRVYGGLMSLLTTLKGLPMTYNRDLQEDKEPFIDTDRTVSASLEIMAGMVEALRFNTRRMENALRAGFLNATELADYLVGKGVPFRDAHHITGNAVALAEDRGKGLEDLTLEEFHSVSDLIGEDVFAVLDYRAAVERRCTHGGTGPASVAAQLAALQQWLSS.

The protein belongs to the lyase 1 family. Argininosuccinate lyase subfamily.

It localises to the cytoplasm. The enzyme catalyses 2-(N(omega)-L-arginino)succinate = fumarate + L-arginine. It participates in amino-acid biosynthesis; L-arginine biosynthesis; L-arginine from L-ornithine and carbamoyl phosphate: step 3/3. The protein is Argininosuccinate lyase of Oleidesulfovibrio alaskensis (strain ATCC BAA-1058 / DSM 17464 / G20) (Desulfovibrio alaskensis).